The primary structure comprises 386 residues: Succinate--CoA ligase [ADP-forming] subunit beta (386 aa).

One can recognise an ATP-grasp domain in the interval 9-244; that stretch reads KEILRSYGVS…LDEEDPKEVE (236 aa). ATP contacts are provided by residues Lys46, 53-55, Glu99, Cys102, and Glu107; that span reads GRG. Residues Asn199 and Asp213 each coordinate Mg(2+). Substrate-binding positions include Asn264 and 321–323; that span reads GIM.

Belongs to the succinate/malate CoA ligase beta subunit family. In terms of assembly, heterotetramer of two alpha and two beta subunits. It depends on Mg(2+) as a cofactor.

It catalyses the reaction succinate + ATP + CoA = succinyl-CoA + ADP + phosphate. It carries out the reaction GTP + succinate + CoA = succinyl-CoA + GDP + phosphate. The protein operates within carbohydrate metabolism; tricarboxylic acid cycle; succinate from succinyl-CoA (ligase route): step 1/1. Its function is as follows. Succinyl-CoA synthetase functions in the citric acid cycle (TCA), coupling the hydrolysis of succinyl-CoA to the synthesis of either ATP or GTP and thus represents the only step of substrate-level phosphorylation in the TCA. The beta subunit provides nucleotide specificity of the enzyme and binds the substrate succinate, while the binding sites for coenzyme A and phosphate are found in the alpha subunit. This is Succinate--CoA ligase [ADP-forming] subunit beta from Geobacillus kaustophilus (strain HTA426).